The following is a 142-amino-acid chain: Fusaric acid resistance protein FusB (142 aa).

Positions 73-142 are disordered; that stretch reads AAPCSRKAST…ASCSPAIRPR (70 aa). Over residues 81–142 the composition is skewed to low complexity; that stretch reads STGSPARSSG…ASCSPAIRPR (62 aa).

In terms of biological role, involved in the resistance (detoxification) of the fungal toxin fusaric acid. This Burkholderia cepacia (Pseudomonas cepacia) protein is Fusaric acid resistance protein FusB (fusB).